We begin with the raw amino-acid sequence, 419 residues long: Putative trans-acting enoyl reductase MT2525 (419 aa).

Lysine 127 is covalently cross-linked (Isoglutamyl lysine isopeptide (Lys-Gln) (interchain with Q-Cter in protein Pup)). The segment at 197 to 232 is disordered; sequence NDPDARRQLSDPYMLSPDRGAEPELGPQPDLPSRRG. A helical membrane pass occupies residues 284-304; sequence VLAPVVSVVGGGVGNAMFGLA.

Belongs to the saccharopine dehydrogenase family. Enoyl reductase subfamily.

The protein resides in the cell membrane. This Mycobacterium tuberculosis (strain CDC 1551 / Oshkosh) protein is Putative trans-acting enoyl reductase MT2525.